Consider the following 333-residue polypeptide: Protein-methionine-sulfoxide reductase catalytic subunit MsrP (333 aa).

The segment at residues Met1–Ala43 is a signal peptide (tat-type signal). Residues Asn87, Tyr90–Glu91, Cys145, Thr180, Asn232, Arg237, and Asn248–Lys250 contribute to the Mo-molybdopterin site.

The protein belongs to the MsrP family. In terms of assembly, heterodimer of a catalytic subunit (MsrP) and a heme-binding subunit (MsrQ). Mo-molybdopterin serves as cofactor. In terms of processing, predicted to be exported by the Tat system. The position of the signal peptide cleavage has not been experimentally proven.

The protein resides in the periplasm. It carries out the reaction L-methionyl-[protein] + a quinone + H2O = L-methionyl-(S)-S-oxide-[protein] + a quinol. The enzyme catalyses L-methionyl-[protein] + a quinone + H2O = L-methionyl-(R)-S-oxide-[protein] + a quinol. Functionally, part of the MsrPQ system that repairs oxidized periplasmic proteins containing methionine sulfoxide residues (Met-O), using respiratory chain electrons. Thus protects these proteins from oxidative-stress damage caused by reactive species of oxygen and chlorine generated by the host defense mechanisms. MsrPQ is essential for the maintenance of envelope integrity under bleach stress, rescuing a wide series of structurally unrelated periplasmic proteins from methionine oxidation. The catalytic subunit MsrP is non-stereospecific, being able to reduce both (R-) and (S-) diastereoisomers of methionine sulfoxide. This is Protein-methionine-sulfoxide reductase catalytic subunit MsrP from Pectobacterium atrosepticum (strain SCRI 1043 / ATCC BAA-672) (Erwinia carotovora subsp. atroseptica).